The following is a 187-amino-acid chain: ATP synthase subunit b (187 aa).

Residues Pro36 to Trp53 form a helical membrane-spanning segment.

Belongs to the ATPase B chain family. F-type ATPases have 2 components, F(1) - the catalytic core - and F(0) - the membrane proton channel. F(1) has five subunits: alpha(3), beta(3), gamma(1), delta(1), epsilon(1). F(0) has four main subunits: a(1), b(2) and c(10-14). The alpha and beta chains form an alternating ring which encloses part of the gamma chain. F(1) is attached to F(0) by a central stalk formed by the gamma and epsilon chains, while a peripheral stalk is formed by the delta and b chains.

Its subcellular location is the cell inner membrane. Its function is as follows. F(1)F(0) ATP synthase produces ATP from ADP in the presence of a proton or sodium gradient. F-type ATPases consist of two structural domains, F(1) containing the extramembraneous catalytic core and F(0) containing the membrane proton channel, linked together by a central stalk and a peripheral stalk. During catalysis, ATP synthesis in the catalytic domain of F(1) is coupled via a rotary mechanism of the central stalk subunits to proton translocation. Component of the F(0) channel, it forms part of the peripheral stalk, linking F(1) to F(0). This chain is ATP synthase subunit b, found in Erythrobacter litoralis (strain HTCC2594).